We begin with the raw amino-acid sequence, 191 residues long: Akirin-1 (191 aa).

Positions L17 to P70 are disordered. At S22 the chain carries Phosphoserine. The short motif at P23 to C28 is the Nuclear localization signal element. Over residues L31 to L48 the composition is skewed to pro residues. The span at Q49–Q59 shows a compositional bias: polar residues. T71 is modified (phosphothreonine). The SYVS motif motif lies at S188–S191.

It belongs to the akirin family. Expressed in macrophages and satellite cells.

Its subcellular location is the nucleus. In terms of biological role, molecular adapter that acts as a bridge between proteins, and which is involved skeletal muscle development. Functions as a signal transducer for MSTN during skeletal muscle regeneration and myogenesis. May regulate chemotaxis of both macrophages and myoblasts by reorganising actin cytoskeleton, leading to more efficient lamellipodia formation via a PI3 kinase dependent pathway. In contrast to AKIRIN2, not involved in nuclear import of proteasomes. The sequence is that of Akirin-1 from Mus musculus (Mouse).